The chain runs to 132 residues: Insulin-like 3 (132 aa).

Residues 1-24 (MSPRPLAWALVLLGAALAVALALG) form the signal peptide. 3 disulfide bridges follow: C36-C117, C48-C130, and C116-C121. A propeptide spans 61-104 (VAGGDRELLQWLEGRHLHGQVSDGDPMLVLVPQALPQASLHHHH) (c peptide like).

Belongs to the insulin family. As to quaternary structure, heterodimer of a B chain and an A chain linked by two disulfide bonds. More strongly expressed in testis than in ovary.

It is found in the secreted. Functionally, seems to play a role in testicular function. May be a trophic hormone with a role in testicular descent in fetal life. Is a ligand for LGR8 receptor. The sequence is that of Insulin-like 3 (INSL3) from Canis lupus familiaris (Dog).